Reading from the N-terminus, the 187-residue chain is 2-oxoglutarate synthase subunit KorC (187 aa).

As to quaternary structure, heterotetramer of the KorA, KorB, KorC and KorD subunits.

The catalysed reaction is 2 oxidized [2Fe-2S]-[ferredoxin] + 2-oxoglutarate + CoA = succinyl-CoA + 2 reduced [2Fe-2S]-[ferredoxin] + CO2 + H(+). This chain is 2-oxoglutarate synthase subunit KorC (korC), found in Methanocaldococcus jannaschii (strain ATCC 43067 / DSM 2661 / JAL-1 / JCM 10045 / NBRC 100440) (Methanococcus jannaschii).